Here is a 168-residue protein sequence, read N- to C-terminus: MNEQTSRLNRERRFLVLLGLICLSLIGGALYMQVVLGEAPCPLCILQRYALLFIAVFAFIAAAMPGRRSLTFFEALVVLSAIGGIVAAGNHVYILANPMVSCGIDTLQPIVDDLPLAKLWPLAFQVDGFCSTPYPPILGLSLAQWALVAFVLTAVLVPLGIYRNRRQA.

Residues Met1–Phe14 lie on the Cytoplasmic side of the membrane. Residues Leu15–Tyr31 traverse the membrane as a helical segment. Topologically, residues Met32 to Tyr49 are periplasmic. Residues Cys41 and Cys44 are joined by a disulfide bond. The helical transmembrane segment at Ala50–Pro65 threads the bilayer. Over Gly66 to Phe72 the chain is Cytoplasmic. Residues Phe73–Gly89 traverse the membrane as a helical segment. Over Asn90–Gln144 the chain is Periplasmic. A disulfide bridge connects residues Cys102 and Cys130. Residues Trp145 to Arg163 form a helical membrane-spanning segment. The Cytoplasmic portion of the chain corresponds to Asn164 to Ala168.

This sequence belongs to the DsbB family.

The protein resides in the cell inner membrane. Its function is as follows. Required for disulfide bond formation in some periplasmic proteins. Acts by oxidizing the DsbA protein. In Pseudomonas putida (strain ATCC 47054 / DSM 6125 / CFBP 8728 / NCIMB 11950 / KT2440), this protein is Disulfide bond formation protein B 1 (dsbB1).